Consider the following 63-residue polypeptide: 2-hydroxymuconate tautomerase (63 aa).

Proline 2 acts as the Proton acceptor; via imino nitrogen in catalysis.

Belongs to the 4-oxalocrotonate tautomerase family. In terms of assembly, homohexamer.

It catalyses the reaction (2Z,4E)-2-hydroxyhexa-2,4-dienedioate = (3E)-2-oxohex-3-enedioate. It participates in aromatic compound metabolism; salicylate degradation. Functionally, catalyzes the ketonization of 2-hydroxymuconate stereoselectively to yield 2-oxo-3-hexenedioate. The protein is 2-hydroxymuconate tautomerase (nahJ) of Pseudomonas putida (Arthrobacter siderocapsulatus).